Reading from the N-terminus, the 366-residue chain is Flagellar P-ring protein (366 aa).

The first 23 residues, 1 to 23 (MRTLKIFALAVSLLSMLAAPVQA), serve as a signal peptide directing secretion.

This sequence belongs to the FlgI family. In terms of assembly, the basal body constitutes a major portion of the flagellar organelle and consists of four rings (L,P,S, and M) mounted on a central rod.

The protein localises to the periplasm. The protein resides in the bacterial flagellum basal body. Its function is as follows. Assembles around the rod to form the L-ring and probably protects the motor/basal body from shearing forces during rotation. The sequence is that of Flagellar P-ring protein from Idiomarina loihiensis (strain ATCC BAA-735 / DSM 15497 / L2-TR).